Here is a 164-residue protein sequence, read N- to C-terminus: Hydrogenase 2 maturation protease (164 aa).

Positions 16, 62, and 93 each coordinate Ni(2+).

The protein belongs to the peptidase A31 family. Ni(2+) is required as a cofactor.

Protease involved in the C-terminal processing of HybC, the large subunit of hydrogenase 2. Specifically cleaves off a 15 amino acid peptide from the C-terminus of the precursor of HybC. This is Hydrogenase 2 maturation protease (hybD) from Escherichia coli (strain K12).